The sequence spans 145 residues: Galectin-5 (145 aa).

Serine 2 is subject to N-acetylserine. Positions 17–145 constitute a Galectin domain; that stretch reads FFTSIPNGLY…GDIQLTHVET (129 aa). 77 to 83 lines the a beta-D-galactoside pocket; it reads WGPEERS.

Monomer. As to expression, erythrocytes.

Its function is as follows. May function in erythrocyte differentiation. The chain is Galectin-5 (Lgals5) from Rattus norvegicus (Rat).